The following is a 246-amino-acid chain: Purine nucleoside phosphorylase ORF3 (246 aa).

Zn(2+)-binding residues include His-71, Cys-110, and His-127.

The protein belongs to the purine nucleoside phosphorylase YfiH/LACC1 family. In terms of assembly, homodimer. Cu(2+) serves as cofactor. Requires Zn(2+) as cofactor.

It catalyses the reaction adenosine + phosphate = alpha-D-ribose 1-phosphate + adenine. The catalysed reaction is S-methyl-5'-thioadenosine + phosphate = 5-(methylsulfanyl)-alpha-D-ribose 1-phosphate + adenine. The enzyme catalyses inosine + phosphate = alpha-D-ribose 1-phosphate + hypoxanthine. It carries out the reaction adenosine + H2O + H(+) = inosine + NH4(+). Its function is as follows. Purine nucleoside enzyme that catalyzes the phosphorolysis of adenosine and inosine nucleosides, yielding D-ribose 1-phosphate and the respective free bases, adenine and hypoxanthine. Also catalyzes the phosphorolysis of S-methyl-5'-thioadenosine into adenine and S-methyl-5-thio-alpha-D-ribose 1-phosphate. Also has adenosine deaminase activity. The chain is Purine nucleoside phosphorylase ORF3 from Streptomyces griseus.